Reading from the N-terminus, the 329-residue chain is Replication factor C small subunit (329 aa).

51–58 serves as a coordination point for ATP; it reads GPPGTGKT.

The protein belongs to the activator 1 small subunits family. RfcS subfamily. In terms of assembly, heteromultimer composed of small subunits (RfcS) and large subunits (RfcL).

Part of the RFC clamp loader complex which loads the PCNA sliding clamp onto DNA. In Staphylothermus marinus (strain ATCC 43588 / DSM 3639 / JCM 9404 / F1), this protein is Replication factor C small subunit.